A 474-amino-acid chain; its full sequence is Coronin-1C (474 aa).

WD repeat units lie at residues 25–70 (DDIR…GRID), 78–118 (GHTG…LTLS), 128–168 (GHSK…ALIN), 172–202 (MHSD…RVID), 215–249 (AHEG…ALWN), and 263–303 (DTSN…PYVH). A coiled-coil region spans residues 436 to 474 (QNEAKLDEILKEIKSIKDTICNQDERISKLEQQMAKIAA). The residue at position 446 (Lys446) is an N6-acetyllysine.

It belongs to the WD repeat coronin family. In terms of assembly, binds F-actin. Interacts with RCC2. Interacts preferentially with nucleotide-free and GDP-bound RAC1. Interacts with VIM (via head domain). Isoform 1 and isoform 2 appear as homotrimers, while isoform 3 seems to exist as monomers. Interacts with MICAL2; this interaction recruits MICAL2 to the actin filaments. Ubiquitous.

The protein resides in the cell membrane. Its subcellular location is the cell projection. It localises to the lamellipodium. It is found in the ruffle membrane. The protein localises to the cytoplasm. The protein resides in the cytoskeleton. Its subcellular location is the cell cortex. It localises to the endosome membrane. It is found in the sarcolemma. The protein localises to the myofibril. The protein resides in the sarcomere. Its subcellular location is the synapse. Plays a role in directed cell migration by regulating the activation and subcellular location of RAC1. Increases the presence of activated RAC1 at the leading edge of migrating cells. Required for normal organization of the cytoskeleton, including the actin cytoskeleton, microtubules and the vimentin intermediate filaments. Plays a role in endoplasmic reticulum-associated endosome fission: localizes to endosome membrane tubules and promotes recruitment of TMCC1, leading to recruitment of the endoplasmic reticulum to endosome tubules for fission. Endosome membrane fission of early and late endosomes is essential to separate regions destined for lysosomal degradation from carriers to be recycled to the plasma membrane. Required for normal cell proliferation, cell migration, and normal formation of lamellipodia. Required for normal distribution of mitochondria within cells. Its function is as follows. Involved in myogenic differentiation. This is Coronin-1C from Homo sapiens (Human).